The chain runs to 86 residues: Co-chaperonin GroES (86 aa).

The protein belongs to the GroES chaperonin family. Heptamer of 7 subunits arranged in a ring. Interacts with the chaperonin GroEL.

It is found in the cytoplasm. Its function is as follows. Together with the chaperonin GroEL, plays an essential role in assisting protein folding. The GroEL-GroES system forms a nano-cage that allows encapsulation of the non-native substrate proteins and provides a physical environment optimized to promote and accelerate protein folding. GroES binds to the apical surface of the GroEL ring, thereby capping the opening of the GroEL channel. In Campylobacter lari (strain RM2100 / D67 / ATCC BAA-1060), this protein is Co-chaperonin GroES.